A 259-amino-acid chain; its full sequence is Probable ABC transporter arginine-binding protein ArtJ (259 aa).

A signal peptide spans 1 to 25 (MIKQIGRFFRAFIFIMPLSLTSCES). 7 residues coordinate L-arginine: Asn-38, Glu-45, Ala-96, Gly-97, Ser-99, Arg-104, and Phe-149.

This sequence belongs to the bacterial solute-binding protein 3 family.

The protein resides in the secreted. It is found in the cell surface. Its function is as follows. Probably part of an ABC transporter complex involved in arginine transport. Binds arginine. Interacts with host epithelial cells, suggesting a role in host-cell adhesion during infection. The protein is Probable ABC transporter arginine-binding protein ArtJ of Chlamydia pneumoniae (Chlamydophila pneumoniae).